Consider the following 85-residue polypeptide: Large ribosomal subunit protein bL27 (85 aa).

The interval 1–24 is disordered; the sequence is MAHKKGQGSSRNGRDSNAQRRGVK.

This sequence belongs to the bacterial ribosomal protein bL27 family.

The sequence is that of Large ribosomal subunit protein bL27 from Syntrophus aciditrophicus (strain SB).